A 339-amino-acid polypeptide reads, in one-letter code: N-acetyl-gamma-glutamyl-phosphate reductase (339 aa).

Residue C145 is part of the active site.

This sequence belongs to the NAGSA dehydrogenase family. Type 1 subfamily.

It is found in the cytoplasm. It catalyses the reaction N-acetyl-L-glutamate 5-semialdehyde + phosphate + NADP(+) = N-acetyl-L-glutamyl 5-phosphate + NADPH + H(+). It participates in amino-acid biosynthesis; L-arginine biosynthesis; N(2)-acetyl-L-ornithine from L-glutamate: step 3/4. Functionally, catalyzes the NADPH-dependent reduction of N-acetyl-5-glutamyl phosphate to yield N-acetyl-L-glutamate 5-semialdehyde. This is N-acetyl-gamma-glutamyl-phosphate reductase from Thermotoga maritima (strain ATCC 43589 / DSM 3109 / JCM 10099 / NBRC 100826 / MSB8).